Consider the following 338-residue polypeptide: VPSPRPQNATVMVWIFGGGFAYGTSSLNVYDGRYLAQAEGAIVVSMNYRVGALGFLSLPGSPVPGNAGLFDQQLALRWVHGNIHRFGGNPQSVTLFGESAGSASVAPHLLSRHSQQFFQRAILQSGTLNAPWATVEDTEARRRAEALAQALGCPTDDDNELLNCLYARPPQEIVSKEGDVVIEPSIFRFPFVPVVDGHFIIDSPIVLLQQGIFKKTDLLLGVNRNEGSFFLIYGAPGFSKDHESLISREDFLENIPMIVPQGNEVSVDAIVLQYTDWLAQNDALKNRDAIEDIVGDYNVICPVVEMATRYAEFGNNVYFYFFNQRASNLPWPQWMGVI.

The N-linked (GlcNAc...) asparagine glycan is linked to asparagine 8. The active-site Acyl-ester intermediate is the serine 99. The cysteines at positions 153 and 164 are disulfide-linked. Residue glutamate 226 is the Charge relay system of the active site.

The protein belongs to the type-B carboxylesterase/lipase family.

Its subcellular location is the synapse. The protein resides in the secreted. It localises to the cell membrane. The enzyme catalyses acetylcholine + H2O = choline + acetate + H(+). Its function is as follows. Terminates signal transduction at the neuromuscular junction by rapid hydrolysis of the acetylcholine released into the synaptic cleft. In Myxine glutinosa (Atlantic hagfish), this protein is Acetylcholinesterase (ache).